The following is a 113-amino-acid chain: 4-cresol dehydrogenase [hydroxylating] cytochrome c subunit (113 aa).

The signal sequence occupies residues 1-33; that stretch reads MTFPFSGAAVKRMLVTGVVLPFGLLVAAGQAQA. The heme c site is built by cysteine 48, cysteine 51, histidine 52, and methionine 83.

In terms of assembly, tetramer of two cytochrome subunits and two flavoprotein subunits. In terms of processing, binds 1 heme c group covalently per subunit.

The protein operates within aromatic compound metabolism; p-cresol degradation. This is the heme-containing component of the p-cresol methylhydroxylase. It accepts electrons from the flavoprotein subunit. The chain is 4-cresol dehydrogenase [hydroxylating] cytochrome c subunit (pchC) from Pseudomonas putida (Arthrobacter siderocapsulatus).